The chain runs to 321 residues: Proline-rich protein 2 (321 aa).

A signal peptide spans 1-26 (MRILPKSGGGALCLLFVFALCSVAHS). Repeat copies occupy residues 168–172 (PPLNL), 173–176 (PPLT), 177–181 (FPKIK), 185–189 (PPIYK), 190–194 (PPVVI), 198–202 (PCPPK), 207–211 (PIYKP), 212–217 (PVPIYK), 218–223 (PPVPIY), 225–229 (PPVVI), 234–238 (CPPKI), 240–244 (KPIYK), 245–251 (PPVPIYK), 252–256 (PPVVI), 262–266 (PPLHK), 267–271 (PIYKH), 272–276 (PVPIY), 277–281 (KPIFK), 282–286 (PPVVV), 288–292 (PKKPC), 293–297 (PPLPK), 298–302 (FPHFP), 303–307 (PKYIP), and 315–319 (PPFPS). The tract at residues 168-319 (PPLNLPPLTF…KFGKWPPFPS (152 aa)) is 24 X 5 AA approximate repeats.

Belongs to the plant proline-rich protein superfamily. Mostly expressed in aerial organs, particularly in expanding leaves, stems, flowers, and siliques.

Its subcellular location is the secreted. It is found in the cell wall. The protein is Proline-rich protein 2 (PRP2) of Arabidopsis thaliana (Mouse-ear cress).